The sequence spans 299 residues: GTPase Era (299 aa).

An Era-type G domain is found at Lys4–Glu171. The interval Gly12–Ser19 is G1. Gly12–Ser19 is a GTP binding site. The interval Gln38–Asn42 is G2. The G3 stretch occupies residues Asp59–Gly62. GTP contacts are provided by residues Asp59–Ile63 and Asn121–Asp124. The interval Asn121–Asp124 is G4. A G5 region spans residues Ile150–Ala152. The region spanning Thr202–Lys280 is the KH type-2 domain.

This sequence belongs to the TRAFAC class TrmE-Era-EngA-EngB-Septin-like GTPase superfamily. Era GTPase family. Monomer.

It localises to the cytoplasm. Its subcellular location is the cell membrane. Its function is as follows. An essential GTPase that binds both GDP and GTP, with rapid nucleotide exchange. Plays a role in 16S rRNA processing and 30S ribosomal subunit biogenesis and possibly also in cell cycle regulation and energy metabolism. The chain is GTPase Era from Streptococcus pneumoniae (strain Hungary19A-6).